Reading from the N-terminus, the 436-residue chain is MKKNVIAIIGKPNVGKSTLFNRLVGKRSSITFDRPGVTRDRLYESFTWNGKEINVIDTGGIQIEKKDFQDQILIQAKIAIEEANVVIFIVDGQAAITSDDKMIYSMLQKSGKPIIVVANKLDNISKFDYGWYSLGADHVFRISALHGNGIGDVLDQCLKYLNFDSDNVSPYFKLSIIGQPNSGKSSLLNAITHENRSIVSDIAGTTRDGVKSVVELRGHKIEIIDTAGITRKSKIDDTVEHLALKRAMSSLDESDLSIVLINSTRELAHFDARIIGYALENNKPIIICVNKWDLINKTQDTMNEYRKKLKNRFHFVPWVPVEFISAKTGSRIDKLIDIVLKVKENLEREIKPSVLTNLIRESQLIQPAPPYNGGRLNIYFARKTENKIPTFIFFVNNKKFVHFSYQRFLEKQIRQNIEYTGCPINIIFKNKSNEFE.

2 EngA-type G domains span residues 4-165 (NVIA…NFDS) and 172-347 (FKLS…ENLE). GTP contacts are provided by residues 10–17 (GKPNVGKS), 57–61 (DTGGI), 119–122 (NKLD), 178–185 (GQPNSGKS), 225–229 (DTAGI), and 290–293 (NKWD). A KH-like domain is found at 348–432 (REIKPSVLTN…PINIIFKNKS (85 aa)).

It belongs to the TRAFAC class TrmE-Era-EngA-EngB-Septin-like GTPase superfamily. EngA (Der) GTPase family. As to quaternary structure, associates with the 50S ribosomal subunit.

Functionally, GTPase that plays an essential role in the late steps of ribosome biogenesis. The protein is GTPase Der of Mycoplasmopsis agalactiae (strain NCTC 10123 / CIP 59.7 / PG2) (Mycoplasma agalactiae).